We begin with the raw amino-acid sequence, 387 residues long: Zn(2)-C6 fungal-type trascription factor aoiH (387 aa).

The segment at residues 21 to 48 (CDFCALSKVKCDRGQPQCVRCIKSGIDC) is a DNA-binding region (zn(2)-C6 fungal-type). Residues 68-87 (VRSTSATTQGTRRKQQTIAQ) show a composition bias toward polar residues. Residues 68-94 (VRSTSATTQGTRRKQQTIAQHSPRRRI) are disordered.

The protein localises to the nucleus. Functionally, transcription factor; part of the gene cluster that mediates the biosynthesis of a methylated derivative of known natural products orthosporin and diaporthin. Positively regultaes the expression of the non-reducing polyketide synthase aoiG and the O-methyltransferase aoiO. The chain is Zn(2)-C6 fungal-type trascription factor aoiH from Aspergillus oryzae (strain ATCC 42149 / RIB 40) (Yellow koji mold).